Reading from the N-terminus, the 178-residue chain is MYLLSPRNGDEEDEQEEIQELISDDEPPNLKLASCATAASSSSSSGSDMEKGRGKACGGGSTAPPPPPPSSSGKSGGGGGSNIREAAASGGGGGVWGKYFSVESLLLLVCVTASLVILPLVLPPLPPPPSMLMLVPVAMLVLLLALAFMPTTTSSSSSAGGGGGGGRNGATTGHAPYL.

Residues 1–85 (MYLLSPRNGD…GGGGGSNIRE (85 aa)) form a disordered region. The span at 10 to 27 (DEEDEQEEIQELISDDEP) shows a compositional bias: acidic residues. The span at 33-47 (ASCATAASSSSSSGS) shows a compositional bias: low complexity. The organ Size Related (OSR) domain stretch occupies residues 100–151 (FSVESLLLLVCVTASLVILPLVLPPLPPPPSMLMLVPVAMLVLLLALAFMPT). The next 2 helical transmembrane spans lie at 105–125 (LLLL…LPPL) and 131–151 (MLML…FMPT). The interval 153-178 (TSSSSSAGGGGGGGRNGATTGHAPYL) is disordered. Gly residues predominate over residues 159-168 (AGGGGGGGRN). Positions 169–178 (GATTGHAPYL) are enriched in low complexity.

This sequence belongs to the plant organ size related (OSR) protein family. Mostly expressed in young tissues such as young roots, young leaves, and seeds. Also present in stems, mature leaves, and spikelets.

It is found in the membrane. The protein resides in the nucleus. It localises to the cytoplasm. The protein localises to the endoplasmic reticulum. Promotes both cell expansion and proliferation-dependent organ growth. This is Protein AUXIN-REGULATED GENE INVOLVED IN ORGAN SIZE (ARGOS) from Oryza sativa subsp. japonica (Rice).